The sequence spans 1327 residues: Myb-like protein O (1327 aa).

Residues 131-142 are compositionally biased toward low complexity; it reads NNNINTTNNNNK. Disordered regions lie at residues 131–153, 263–390, 504–668, and 717–770; these read NNNI…EESN, EEED…DESS, PPQQ…NHES, and KKKK…DNDD. A compositionally biased stretch (acidic residues) spans 263-283; it reads EEEDDEDYIPPEEEEDDDEDN. Positions 322-353 are enriched in low complexity; the sequence is YNNTANNINNNNIGDESDNNNNNNNNINNNSN. Acidic residues predominate over residues 356–374; sequence DDDDDDDDDNNDDDDDDND. A compositionally biased stretch (low complexity) spans 511–532; that stretch reads SSSSINSSNTMSSSSSSSSLSK. Residues 533-542 show a composition bias toward basic residues; the sequence is NKLKKKKKEE. Positions 543–554 are enriched in basic and acidic residues; the sequence is KRKEEKRKEEKR. The segment covering 555–577 has biased composition (basic residues); the sequence is KEKKRKKRQSITISKFKKNKKKT. The span at 585–606 shows a compositional bias: acidic residues; it reads SESDSSSDDSDDSDFYYSDIEE. The segment covering 607 to 619 has biased composition (gly residues); the sequence is GGGGNGNGSGSGV. The segment covering 624–633 has biased composition (acidic residues); the sequence is SDNEEGDSSS. 2 stretches are compositionally biased toward low complexity: residues 646–668 and 722–732; these read HTNN…NHES and QSSSSSSSSTI. A compositionally biased stretch (acidic residues) spans 754-770; the sequence is NDDEDDNNNNNEDDNDD. In terms of domain architecture, HTH myb-type spans 897–953; the sequence is NVKLNQLKFTGGEDLLLLMGVKRFGTFNWRIIQKRYFPNKTDDQLFHRYKNLLSHSS. Positions 925 to 949 form a DNA-binding region, H-T-H motif; that stretch reads WRIIQKRYFPNKTDDQLFHRYKNLL. A Myb-like 1 domain is found at 959–1010; it reads KQYLNGAKFTKEEEEKLDGAIKIHGLKWDIISRDYLHWKEPAMLKKFYEKRE. Low complexity-rich tracts occupy residues 1061 to 1118 and 1144 to 1160; these read NSTN…NENN and PIIE…ETSP. 2 disordered regions span residues 1061–1122 and 1144–1168; these read NSTN…YEFG and PIIE…PCPI. The 49-residue stretch at 1268-1316 folds into the Myb-like 2 domain; sequence KWTREEDRIILITVKEKGTVDNEIWKSLSDTKIQDKTPDQIMYRYLQLL.

Its subcellular location is the nucleus. The protein is Myb-like protein O (mybO) of Dictyostelium discoideum (Social amoeba).